The following is a 187-amino-acid chain: UPF0301 protein ESA_00394 (187 aa).

It belongs to the UPF0301 (AlgH) family.

This Cronobacter sakazakii (strain ATCC BAA-894) (Enterobacter sakazakii) protein is UPF0301 protein ESA_00394.